Reading from the N-terminus, the 849-residue chain is Serrate RNA effector molecule homolog A (849 aa).

Disordered regions lie at residues 1–90 and 276–409; these read MADS…HGSD and KREA…PRPL. Basic and acidic residues-rich tracts occupy residues 8-73, 276-306, and 314-342; these read YDRR…RHDL, KREA…KPEN, and EKPV…ETRK. Residues 354 to 364 are compositionally biased toward acidic residues; the sequence is SDDGSDSESDT. Basic and acidic residues predominate over residues 381–405; it reads RAEETPKKEEDTEKQKEKQKEDTVK.

It belongs to the ARS2 family. In terms of assembly, interacts ncbp1/cbp80.

Its subcellular location is the nucleus. It localises to the nucleoplasm. The protein resides in the cytoplasm. In terms of biological role, acts as a mediator between the cap-binding complex (CBC) and the primary microRNAs (miRNAs) processing machinery during cell proliferation. Contributes to the stability and delivery of capped primary miRNA transcripts to the primary miRNA processing complex, thereby playing a role in RNA-mediated gene silencing (RNAi) by miRNAs. The protein is Serrate RNA effector molecule homolog A (srrt-a) of Xenopus laevis (African clawed frog).